A 219-amino-acid polypeptide reads, in one-letter code: Guanylate kinase (219 aa).

Residues 15 to 194 (GLMFVLSSPS…AFAEVQSILK (180 aa)) enclose the Guanylate kinase-like domain. 22-29 (SPSGAGKT) serves as a coordination point for ATP.

It belongs to the guanylate kinase family.

It localises to the cytoplasm. It catalyses the reaction GMP + ATP = GDP + ADP. Its function is as follows. Essential for recycling GMP and indirectly, cGMP. The protein is Guanylate kinase of Nitrobacter winogradskyi (strain ATCC 25391 / DSM 10237 / CIP 104748 / NCIMB 11846 / Nb-255).